A 208-amino-acid chain; its full sequence is F-box/kelch-repeat protein At2g43270 (208 aa).

One can recognise an F-box domain in the interval 1–44; that stretch reads MIYVVPDLLEEIFLGLPLKSILRFKTVSKQWRSILESKSFAERR. The Kelch repeat unit spans residues 149-200; that stretch reads RDKFNGSYKVVRMCFSPVEKCEVLDVETGEWSELNPPPNDIDVGRKSVCVNG.

This chain is F-box/kelch-repeat protein At2g43270, found in Arabidopsis thaliana (Mouse-ear cress).